The chain runs to 91 residues: Small ribosomal subunit protein uS17 (91 aa).

It belongs to the universal ribosomal protein uS17 family. In terms of assembly, part of the 30S ribosomal subunit.

In terms of biological role, one of the primary rRNA binding proteins, it binds specifically to the 5'-end of 16S ribosomal RNA. This is Small ribosomal subunit protein uS17 from Psychrobacter cryohalolentis (strain ATCC BAA-1226 / DSM 17306 / VKM B-2378 / K5).